The primary structure comprises 777 residues: Phosphoribosylformylglycinamidine synthase subunit PurL (777 aa).

Residue H50 is part of the active site. Y53 and K92 together coordinate ATP. E94 contributes to the Mg(2+) binding site. Residues S95–H98 and R117 each bind substrate. Catalysis depends on H96, which acts as the Proton acceptor. D118 contacts Mg(2+). Q241 serves as a coordination point for substrate. D269 contacts Mg(2+). Position 313 to 315 (E313 to Q315) interacts with substrate. Residues D520 and G557 each coordinate ATP. N558 is a Mg(2+) binding site. S560 lines the substrate pocket.

Belongs to the FGAMS family. Monomer. Part of the FGAM synthase complex composed of 1 PurL, 1 PurQ and 2 PurS subunits.

Its subcellular location is the cytoplasm. The catalysed reaction is N(2)-formyl-N(1)-(5-phospho-beta-D-ribosyl)glycinamide + L-glutamine + ATP + H2O = 2-formamido-N(1)-(5-O-phospho-beta-D-ribosyl)acetamidine + L-glutamate + ADP + phosphate + H(+). It functions in the pathway purine metabolism; IMP biosynthesis via de novo pathway; 5-amino-1-(5-phospho-D-ribosyl)imidazole from N(2)-formyl-N(1)-(5-phospho-D-ribosyl)glycinamide: step 1/2. Part of the phosphoribosylformylglycinamidine synthase complex involved in the purines biosynthetic pathway. Catalyzes the ATP-dependent conversion of formylglycinamide ribonucleotide (FGAR) and glutamine to yield formylglycinamidine ribonucleotide (FGAM) and glutamate. The FGAM synthase complex is composed of three subunits. PurQ produces an ammonia molecule by converting glutamine to glutamate. PurL transfers the ammonia molecule to FGAR to form FGAM in an ATP-dependent manner. PurS interacts with PurQ and PurL and is thought to assist in the transfer of the ammonia molecule from PurQ to PurL. In Trichormus variabilis (strain ATCC 29413 / PCC 7937) (Anabaena variabilis), this protein is Phosphoribosylformylglycinamidine synthase subunit PurL.